Consider the following 102-residue polypeptide: Small ribosomal subunit protein eS24 (102 aa).

The protein belongs to the eukaryotic ribosomal protein eS24 family.

In Methanococcus aeolicus (strain ATCC BAA-1280 / DSM 17508 / OCM 812 / Nankai-3), this protein is Small ribosomal subunit protein eS24.